Reading from the N-terminus, the 414-residue chain is 2,3-bisphosphoglycerate-independent phosphoglycerate mutase (414 aa).

Belongs to the BPG-independent phosphoglycerate mutase family. A-PGAM subfamily.

It carries out the reaction (2R)-2-phosphoglycerate = (2R)-3-phosphoglycerate. The protein operates within carbohydrate degradation; glycolysis; pyruvate from D-glyceraldehyde 3-phosphate: step 3/5. Catalyzes the interconversion of 2-phosphoglycerate and 3-phosphoglycerate. This is 2,3-bisphosphoglycerate-independent phosphoglycerate mutase from Saccharolobus solfataricus (strain ATCC 35092 / DSM 1617 / JCM 11322 / P2) (Sulfolobus solfataricus).